The primary structure comprises 747 residues: DNA repair and recombination protein RAD54-like (747 aa).

Positions 1-41 (MRRSLAPSQLAKRKPEGRSCDDEDWQPGLVTPRKRKSSSET) are disordered. A required for chromatin remodeling, strand pairing activities and coupling of ATPase activity region spans residues 2-9 (RRSLAPSQ). Position 38 is a phosphoserine (serine 38). Positions 170–345 (SRRIPGSHGC…FSLVHFVNSG (176 aa)) constitute a Helicase ATP-binding domain. ATP is bound at residue 183-190 (DEMGLGKT). A DEGH box motif is present at residues 296-299 (DEGH). One can recognise a Helicase C-terminal domain in the interval 500 to 653 (VLDYILAVTR…CVVDEEQDVE (154 aa)). Lysine 515 bears the N6-acetyllysine mark. Position 572 is a phosphoserine; by NEK1 (serine 572).

The protein belongs to the SNF2/RAD54 helicase family. In terms of assembly, homohexamer. Interacts (via N-terminus) with RAD51. Interacts with NAP1L1. Interacts with BRD9; this interaction orchestrates RAD51-RAD54 complex formation. In terms of processing, acetylated. Acetylation promotes interaction with BRD9, and subsequently with RAD54, which is essential for homologous recombination (HR). Phosphorylated. Phosphorylation at Ser-572 by NEK1 specifically in G2 phase allows efficient removal of RAD51 filaments from DNA.

It is found in the nucleus. It catalyses the reaction ATP + H2O = ADP + phosphate + H(+). Functionally, plays an essential role in homologous recombination (HR) which is a major pathway for repairing DNA double-strand breaks (DSBs), single-stranded DNA (ssDNA) gaps, and stalled or collapsed replication forks. Acts as a molecular motor during the homology search and guides RAD51 ssDNA along a donor dsDNA thereby changing the homology search from the diffusion-based mechanism to a motor-guided mechanism. Also plays an essential role in RAD51-mediated synaptic complex formation which consists of three strands encased in a protein filament formed once homology is recognized. Once DNA strand exchange occured, dissociates RAD51 from nucleoprotein filaments formed on dsDNA. The polypeptide is DNA repair and recombination protein RAD54-like (RAD54L) (Homo sapiens (Human)).